Here is a 378-residue protein sequence, read N- to C-terminus: Erythronate-4-phosphate dehydrogenase (378 aa).

Substrate contacts are provided by S45 and T66. Residues D142 and T169 each contribute to the NAD(+) site. The active site involves R202. D226 lines the NAD(+) pocket. E231 is an active-site residue. H248 serves as the catalytic Proton donor. G251 is an NAD(+) binding site. Substrate is bound at residue Y252.

The protein belongs to the D-isomer specific 2-hydroxyacid dehydrogenase family. PdxB subfamily. Homodimer.

It localises to the cytoplasm. The enzyme catalyses 4-phospho-D-erythronate + NAD(+) = (R)-3-hydroxy-2-oxo-4-phosphooxybutanoate + NADH + H(+). The protein operates within cofactor biosynthesis; pyridoxine 5'-phosphate biosynthesis; pyridoxine 5'-phosphate from D-erythrose 4-phosphate: step 2/5. Catalyzes the oxidation of erythronate-4-phosphate to 3-hydroxy-2-oxo-4-phosphonooxybutanoate. This Cellvibrio japonicus (strain Ueda107) (Pseudomonas fluorescens subsp. cellulosa) protein is Erythronate-4-phosphate dehydrogenase.